Reading from the N-terminus, the 372-residue chain is Chaperone protein DnaJ (372 aa).

The region spanning 5 to 70 is the J domain; that stretch reads DFYEVLGVTK…QKRAAYDRYG (66 aa). The CR-type zinc finger occupies 129 to 207; the sequence is GKLASLTLPT…CGGAGRVTRE (79 aa). Zn(2+) is bound by residues Cys-142, Cys-145, Cys-159, Cys-162, Cys-181, Cys-184, Cys-195, and Cys-198. CXXCXGXG motif repeat units follow at residues 142 to 149, 159 to 166, 181 to 188, and 195 to 202; these read CEACDGTG, CPTCGGQG, CPQCHGRG, and CQACGGAG.

This sequence belongs to the DnaJ family. Homodimer. The cofactor is Zn(2+).

It is found in the cytoplasm. Its function is as follows. Participates actively in the response to hyperosmotic and heat shock by preventing the aggregation of stress-denatured proteins and by disaggregating proteins, also in an autonomous, DnaK-independent fashion. Unfolded proteins bind initially to DnaJ; upon interaction with the DnaJ-bound protein, DnaK hydrolyzes its bound ATP, resulting in the formation of a stable complex. GrpE releases ADP from DnaK; ATP binding to DnaK triggers the release of the substrate protein, thus completing the reaction cycle. Several rounds of ATP-dependent interactions between DnaJ, DnaK and GrpE are required for fully efficient folding. Also involved, together with DnaK and GrpE, in the DNA replication of plasmids through activation of initiation proteins. In Beijerinckia indica subsp. indica (strain ATCC 9039 / DSM 1715 / NCIMB 8712), this protein is Chaperone protein DnaJ.